Consider the following 56-residue polypeptide: Conotoxin Cal6.41c (56 aa).

A signal peptide spans 1–23 (MSGSGAMLLGLLILVAMATSLDT). Disulfide bonds link C27–C41, C33–C50, and C40–C54.

As to expression, expressed by the venom duct.

The protein resides in the secreted. In terms of biological role, probable neurotoxin. This chain is Conotoxin Cal6.41c, found in Californiconus californicus (California cone).